The sequence spans 620 residues: Glutathione-regulated potassium-efflux system protein KefC (620 aa).

Transmembrane regions (helical) follow at residues 4–24 (HTLI…PIAV), 26–46 (LGLG…PWGL), 54–74 (SILH…GLEL), 90–110 (GALQ…LLGL), 114–134 (VAEL…MQAM), 149–169 (FAVL…IPLL), 178–198 (MGAF…VVLL), 218–238 (VFSA…EEVG), 270–290 (GLLL…GTLI), 294–314 (LRIV…LWLI), 327–347 (WFAV…GAAQ), and 359–379 (SLTL…VILN). One can recognise an RCK N-terminal domain in the interval 399-518 (QPRVIIAGFG…AGVEKPERET (120 aa)). A disordered region spans residues 597–620 (GWQGTEEGKHTGNMADEPETKPSS).

It belongs to the monovalent cation:proton antiporter 2 (CPA2) transporter (TC 2.A.37) family. KefC subfamily. As to quaternary structure, homodimer. Interacts with the regulatory subunit KefF.

It localises to the cell inner membrane. Pore-forming subunit of a potassium efflux system that confers protection against electrophiles. Catalyzes K(+)/H(+) antiport. In Escherichia coli O45:K1 (strain S88 / ExPEC), this protein is Glutathione-regulated potassium-efflux system protein KefC.